A 560-amino-acid polypeptide reads, in one-letter code: MSNVGKPILAGLIAGLSLLGLAVAQAAAPEMTAEEKEASKQIYFERCAGCHGVLRKGATGKNLEPHWSKTEADGKKTEGGTLNLGTKRLENIIAYGTEGGMVNYDDILTKEEINMMARYIQHTPDIPPEFSLQDMKDSWNLIVPVEKRVTKQMNKINLQNVFAVTLRDAGKLALIDGDTHKIWKVLESGYAVHISRMSASGRYVYTTGRDGLTTIIDLWPEEPMTVATVRFGSDMRSVDVSKFEGYEDKYLIGGTYWPPQYSIVDGLTLEPIKVVSTRGQTVDGEYHPEPRVASIVASHIKPEWVVNVKETGQIILVDYTDLKNLKTTTIESAKFLHDGGWDYSKRYFMVAANASNKVAAVDTKTGKLAALIDTAKIPHPGRGANFVHPQFGPVWSTGHLGDDVVSLISTPSEESKYAKYKEHNWKVVQELKMPGAGNLFVKTHPKSKHFWADAPMNPEREVAESVYVFDMNDLSKAPIQLNVAKDSGLPESKAIRRAVQPEYNKAGDEVWISLWGGKTDQSAIVIYDDKTLKLKRVITDPAVVTPTGKFNVFNTMNDVY.

The first 26 residues, 1–26 (MSNVGKPILAGLIAGLSLLGLAVAQA), serve as a signal peptide directing secretion. The tract at residues 27–29 (AAP) is N-terminal tail. One can recognise a Cytochrome c domain in the interval 30-126 (EMTAEEKEAS…ARYIQHTPDI (97 aa)). Residues Cys47, Cys50, and His51 each contribute to the heme c site. Residues 61 to 80 (KNLEPHWSKTEADGKKTEGG) form a disordered region. A compositionally biased stretch (basic and acidic residues) spans 63-78 (LEPHWSKTEADGKKTE). Thr97 and Met101 together coordinate heme c. Residues 127–560 (PPEFSLQDMK…NVFNTMNDVY (434 aa)) are D1-heme domain. The heme d1 site is built by His193, Arg236, Ser237, Tyr256, Arg382, and Gln500.

In terms of assembly, homodimer in solution. The cofactor is heme c. Requires heme as cofactor.

The protein localises to the periplasm. It catalyses the reaction nitric oxide + Fe(III)-[cytochrome c] + H2O = Fe(II)-[cytochrome c] + nitrite + 2 H(+). The catalysed reaction is A + NH4(+) + H2O = hydroxylamine + AH2 + H(+). The chain is Nitrite reductase (nirS) from Stutzerimonas stutzeri (Pseudomonas stutzeri).